We begin with the raw amino-acid sequence, 216 residues long: Adenylate kinase (216 aa).

10–15 (GAGKGT) is a binding site for ATP. The interval 30-59 (STGDMLRAAVKAGTELGIKAKSIMDAGGLV) is NMP. Residues Thr31, Arg36, 57–59 (GLV), 85–88 (GFPR), and Gln92 each bind AMP. Residues 122 to 159 (GRRVHEASGRVYHIVYNPPKIAGKDDITGEELVQRKDD) form an LID region. ATP-binding positions include Arg123 and 132-133 (VY). Positions 156 and 167 each coordinate AMP. Residue Gly202 coordinates ATP.

The protein belongs to the adenylate kinase family. As to quaternary structure, monomer.

It is found in the cytoplasm. It carries out the reaction AMP + ATP = 2 ADP. It functions in the pathway purine metabolism; AMP biosynthesis via salvage pathway; AMP from ADP: step 1/1. Its function is as follows. Catalyzes the reversible transfer of the terminal phosphate group between ATP and AMP. Plays an important role in cellular energy homeostasis and in adenine nucleotide metabolism. The chain is Adenylate kinase from Pseudomonas fluorescens (strain Pf0-1).